Here is a 310-residue protein sequence, read N- to C-terminus: Repression factor of MSEs protein 1 (310 aa).

2 disordered regions span residues 83 to 155 (TQEV…EANA) and 192 to 230 (DGIRRRSSRISERDKRRSQSRLGSEEDEEGDGHDGDEGE). The span at 92 to 106 (RNTSSSSSSTRSNSS) shows a compositional bias: low complexity. A compositionally biased stretch (polar residues) spans 107–120 (ADISDTEYSGENTP). The span at 127–136 (SRRRRTRSRA) shows a compositional bias: basic residues. Positions 139-155 (RENSLPASLPSISEANA) are enriched in polar residues. Basic and acidic residues predominate over residues 192 to 208 (DGIRRRSSRISERDKRR). S215 is modified (phosphoserine).

Interacts directly with HST1 and SUM1. Required for the interaction between HST1 and SUM1.

It is found in the nucleus. Tethering factor required for histone deacetylase HST1-mediated repression. Probably involved in targeting HST1 to a subset of SUM1-regulated genes. The protein is Repression factor of MSEs protein 1 (RFM1) of Saccharomyces cerevisiae (strain ATCC 204508 / S288c) (Baker's yeast).